Consider the following 172-residue polypeptide: 3-hydroxydecanoyl-[acyl-carrier-protein] dehydratase (172 aa).

The active site involves H71.

The protein belongs to the thioester dehydratase family. FabA subfamily. In terms of assembly, homodimer.

Its subcellular location is the cytoplasm. The catalysed reaction is a (3R)-hydroxyacyl-[ACP] = a (2E)-enoyl-[ACP] + H2O. It carries out the reaction (3R)-hydroxydecanoyl-[ACP] = (2E)-decenoyl-[ACP] + H2O. The enzyme catalyses (2E)-decenoyl-[ACP] = (3Z)-decenoyl-[ACP]. Its pathway is lipid metabolism; fatty acid biosynthesis. Necessary for the introduction of cis unsaturation into fatty acids. Catalyzes the dehydration of (3R)-3-hydroxydecanoyl-ACP to E-(2)-decenoyl-ACP and then its isomerization to Z-(3)-decenoyl-ACP. Can catalyze the dehydratase reaction for beta-hydroxyacyl-ACPs with saturated chain lengths up to 16:0, being most active on intermediate chain length. This chain is 3-hydroxydecanoyl-[acyl-carrier-protein] dehydratase, found in Pseudoalteromonas atlantica (strain T6c / ATCC BAA-1087).